The following is a 217-amino-acid chain: GTP cyclohydrolase-2 (217 aa).

50-54 provides a ligand contact to GTP; that stretch reads RIHSE. Zn(2+) is bound by residues Cys55, Cys66, and Cys68. Residues Gln71, 93 to 95, and Thr115 each bind GTP; that span reads EGR. The Proton acceptor role is filled by Asp127. The active-site Nucleophile is Arg129. Residues Thr150 and Lys155 each contribute to the GTP site.

It belongs to the GTP cyclohydrolase II family. The cofactor is Zn(2+).

It carries out the reaction GTP + 4 H2O = 2,5-diamino-6-hydroxy-4-(5-phosphoribosylamino)-pyrimidine + formate + 2 phosphate + 3 H(+). It participates in cofactor biosynthesis; riboflavin biosynthesis; 5-amino-6-(D-ribitylamino)uracil from GTP: step 1/4. Its function is as follows. Catalyzes the conversion of GTP to 2,5-diamino-6-ribosylamino-4(3H)-pyrimidinone 5'-phosphate (DARP), formate and pyrophosphate. The chain is GTP cyclohydrolase-2 from Actinobacillus succinogenes (strain ATCC 55618 / DSM 22257 / CCUG 43843 / 130Z).